An 87-amino-acid polypeptide reads, in one-letter code: Developmentally-regulated ectodermal protein (87 aa).

A signal peptide spans 1–16 (MKRLLVLTLVSAILMA).

This is Developmentally-regulated ectodermal protein from Tripneustes gratilla (Hawaian sea urchin).